Reading from the N-terminus, the 883-residue chain is DNA double-strand break repair Rad50 ATPase (883 aa).

ATP-binding positions include lysine 12, asparagine 32–serine 38, and glutamine 137. Residues glutamate 244–aspartate 283 are a coiled coil. Disordered stretches follow at residues glutamate 271–aspartate 290 and aspartate 305–valine 326. Over residues serine 313–valine 326 the composition is skewed to basic and acidic residues. Coiled-coil stretches lie at residues alanine 336–leucine 389 and leucine 414–glycine 452. One can recognise a Zinc-hook domain in the interval phenylalanine 407 to alanine 506. Cysteine 454 and cysteine 457 together coordinate Zn(2+). Positions glutamate 508–aspartate 565 are disordered. 2 coiled-coil regions span residues arginine 571 to alanine 604 and lysine 668 to leucine 720.

The protein belongs to the SMC family. RAD50 subfamily. Homodimer. Forms a heterotetramer composed of two Mre11 subunits and two Rad50 subunits. Requires Zn(2+) as cofactor.

Part of the Rad50/Mre11 complex, which is involved in the early steps of DNA double-strand break (DSB) repair. Rad50 controls the balance between DNA end bridging and DNA resection via ATP-dependent structural rearrangements of the Rad50/Mre11 complex. The polypeptide is DNA double-strand break repair Rad50 ATPase (Halobacterium salinarum (strain ATCC 700922 / JCM 11081 / NRC-1) (Halobacterium halobium)).